Consider the following 161-residue polypeptide: Cyclic pyranopterin monophosphate synthase (161 aa).

Substrate contacts are provided by residues 75–77 (MCH) and 114–115 (ME). The active site involves Asp-129.

It belongs to the MoaC family. In terms of assembly, homohexamer; trimer of dimers.

The catalysed reaction is (8S)-3',8-cyclo-7,8-dihydroguanosine 5'-triphosphate = cyclic pyranopterin phosphate + diphosphate. Its pathway is cofactor biosynthesis; molybdopterin biosynthesis. In terms of biological role, catalyzes the conversion of (8S)-3',8-cyclo-7,8-dihydroguanosine 5'-triphosphate to cyclic pyranopterin monophosphate (cPMP). The protein is Cyclic pyranopterin monophosphate synthase of Staphylococcus carnosus (strain TM300).